The sequence spans 584 residues: Pescadillo homolog (584 aa).

A required for 28S ribosomal RNA processing region spans residues 1-54 (MGGLEKKKYERGSATNYITRNKARKKLQLSLPDFRRLCILKGIYPHEPKHKKKV). The tract at residues 1 to 257 (MGGLEKKKYE…PKLEGQAQAE (257 aa)) is sufficient for nucleolar localization. At Lys-98 the chain carries N6-acetyllysine. Residues 312-414 (RKKELEAQEK…LLLPVAEYFP (103 aa)) are sufficient for interaction with MAP1B. The region spanning 321–414 (KHKKLFEGLK…LLLPVAEYFP (94 aa)) is the BRCT domain. Residues 449–510 (DPGHLEEEEE…EEKKPQVMAG (62 aa)) form a disordered region. Positions 454–489 (EEEEEEDEDDDNEGDVAAENEEEDVEVESEEEEEEE) are enriched in acidic residues. The span at 496–505 (EQHRLEEKKP) shows a compositional bias: basic and acidic residues. Lys-513 participates in a covalent cross-link: Glycyl lysine isopeptide (Lys-Gly) (interchain with G-Cter in SUMO1); alternate. Lys-513 participates in a covalent cross-link: Glycyl lysine isopeptide (Lys-Gly) (interchain with G-Cter in SUMO2); alternate. A required for 28S ribosomal RNA processing region spans residues 535 to 584 (MMKKREKYLYQKIMFGKRRKIREANKLAEKRKAHDDAVRSEKKAKRTRPV). A compositionally biased stretch (basic and acidic residues) spans 560-575 (KLAEKRKAHDDAVRSE). Residues 560 to 584 (KLAEKRKAHDDAVRSEKKAKRTRPV) are disordered.

The protein belongs to the pescadillo family. In terms of assembly, component of the PeBoW complex, composed of BOP1, PES1 and WDR12. The complex is held together by BOP1, which interacts with PES1 via its N-terminal domain and with WDR12 via a high-affinity interaction between the seven-bladed beta-propeller domains of the 2 proteins. The PeBoW complex associates with the 66S pre-ribosome. The PeBoW complex also associates with DDX27, PES1 interacts directly with DDX27. Interacts with IRS1 and UBTF. May interact with MAP1B. Sumoylated. In terms of tissue distribution, ubiquitous. Highest levels appear to be found in tissues that contain a population of proliferating cells, such as ovary and testis. Also appears to be highly expressed in kidney and liver. In the brain expression is restricted to neural progenitor cells and postmitotic neurons. Highly expressed in malignant astrocytes.

It localises to the nucleus. It is found in the nucleolus. The protein localises to the nucleoplasm. Its subcellular location is the chromosome. Its function is as follows. Component of the PeBoW complex, which is required for maturation of 28S and 5.8S ribosomal RNAs and formation of the 60S ribosome. In Mus musculus (Mouse), this protein is Pescadillo homolog (Pes1).